A 366-amino-acid chain; its full sequence is Ribosomal RNA large subunit methyltransferase M (366 aa).

S-adenosyl-L-methionine-binding positions include serine 188, cysteine 221–glycine 224, aspartate 240, aspartate 260, and aspartate 277. Lysine 306 acts as the Proton acceptor in catalysis.

This sequence belongs to the class I-like SAM-binding methyltransferase superfamily. RNA methyltransferase RlmE family. RlmM subfamily. In terms of assembly, monomer.

The protein localises to the cytoplasm. It carries out the reaction cytidine(2498) in 23S rRNA + S-adenosyl-L-methionine = 2'-O-methylcytidine(2498) in 23S rRNA + S-adenosyl-L-homocysteine + H(+). Catalyzes the 2'-O-methylation at nucleotide C2498 in 23S rRNA. In Erwinia tasmaniensis (strain DSM 17950 / CFBP 7177 / CIP 109463 / NCPPB 4357 / Et1/99), this protein is Ribosomal RNA large subunit methyltransferase M.